The primary structure comprises 33 residues: Alpha-amanitin proprotein (33 aa).

A propeptide spanning residues 1 to 10 (MSDINATRLP) is cleaved from the precursor. The residue at position 11 (I11) is a (3R,4R)-4,5-dihydroxyisoleucine; in form alpha-amanitin. The residue at position 11 (I11) is a (3R,4S)-4-hydroxyisoleucine; in form gamma-amanitin. The segment at residues 11 to 18 (IWGIGCNP) is a cross-link (cyclopeptide (Ile-Pro)). The segment at residues 12–16 (WGIGC) is a cross-link (2'-cysteinyl-6'-hydroxytryptophan sulfoxide (Trp-Cys)). P18 is subject to 4-hydroxyproline. Residues 19–33 (CVGDEVTALLTRGEA) constitute a propeptide that is removed on maturation.

Belongs to the MSDIN fungal toxin family. In terms of processing, processed by the macrocyclase-peptidase enzyme POPB to yield a toxic cyclic decapeptide. POPB first removes 10 residues from the N-terminus. Conformational trapping of the remaining peptide forces the enzyme to release this intermediate rather than proceed to macrocyclization. The enzyme rebinds the remaining peptide in a different conformation and catalyzes macrocyclization of the N-terminal 8 residues.

In terms of biological role, major toxin belonging to the bicyclic octapeptides amatoxins that acts by binding non-competitively to RNA polymerase II and greatly slowing the elongation of transcripts from target promoters. The chain is Alpha-amanitin proprotein from Amanita fuligineoides.